The chain runs to 357 residues: Aminomethyltransferase (357 aa).

It belongs to the GcvT family. As to quaternary structure, the glycine cleavage system is composed of four proteins: P, T, L and H.

The enzyme catalyses N(6)-[(R)-S(8)-aminomethyldihydrolipoyl]-L-lysyl-[protein] + (6S)-5,6,7,8-tetrahydrofolate = N(6)-[(R)-dihydrolipoyl]-L-lysyl-[protein] + (6R)-5,10-methylene-5,6,7,8-tetrahydrofolate + NH4(+). Functionally, the glycine cleavage system catalyzes the degradation of glycine. This is Aminomethyltransferase from Halothermothrix orenii (strain H 168 / OCM 544 / DSM 9562).